Consider the following 237-residue polypeptide: Ribonuclease 3 (237 aa).

The 131-residue stretch at 3–133 (SRQPLLDALG…LLGAIYLQHG (131 aa)) folds into the RNase III domain. E43 is a binding site for Mg(2+). Residue D47 is part of the active site. Residues D119 and E122 each coordinate Mg(2+). The active site involves E122. The 69-residue stretch at 160–228 (DWKTSLQELT…AAATWKALDV (69 aa)) folds into the DRBM domain.

Belongs to the ribonuclease III family. Homodimer. It depends on Mg(2+) as a cofactor.

Its subcellular location is the cytoplasm. The catalysed reaction is Endonucleolytic cleavage to 5'-phosphomonoester.. In terms of biological role, digests double-stranded RNA. Involved in the processing of primary rRNA transcript to yield the immediate precursors to the large and small rRNAs (23S and 16S). Processes some mRNAs, and tRNAs when they are encoded in the rRNA operon. Processes pre-crRNA and tracrRNA of type II CRISPR loci if present in the organism. The sequence is that of Ribonuclease 3 from Mycolicibacterium paratuberculosis (strain ATCC BAA-968 / K-10) (Mycobacterium paratuberculosis).